Consider the following 362-residue polypeptide: MITNKVKTLILVNLGGPRTPSEIEVFLRDLFSDPFVFDLPLPEFLRLRLARFIAKKRAPKVQKSYESMGFGGGSPLVEETAKQAHALELALNERSSEQWNVKVAMACGYPNMRDIEFGKPNQDTVYLPLYPQFSRSTVLSTLAILETKFGECPVGSGGYVPHFGLDPNFHSISAKFIYEFFTNQLPKDQYLHYPEEKPNCDWRNLDLVFSAHGVPMRLIHKGDRYMEEVELSVKGIADELSKFGFNGGVHISYQSKVGPAKWTEPSTIQMISSLAKQGKHIAVYPISFVSDHLETLEEIGEQFKDLTWEMGGKSFVRIPALGIYPSFIQFLAEKVMHSDRKIQHCICREKGGESLQHCRFKD.

Residues histidine 212 and glutamate 294 each contribute to the Fe cation site.

It belongs to the ferrochelatase family.

The protein localises to the cytoplasm. It catalyses the reaction heme b + 2 H(+) = protoporphyrin IX + Fe(2+). The protein operates within porphyrin-containing compound metabolism; protoheme biosynthesis; protoheme from protoporphyrin-IX: step 1/1. In terms of biological role, catalyzes the ferrous insertion into protoporphyrin IX. In Leptospira biflexa serovar Patoc (strain Patoc 1 / Ames), this protein is Ferrochelatase.